The following is a 286-amino-acid chain: ATP synthase gamma chain (286 aa).

The protein belongs to the ATPase gamma chain family. F-type ATPases have 2 components, CF(1) - the catalytic core - and CF(0) - the membrane proton channel. CF(1) has five subunits: alpha(3), beta(3), gamma(1), delta(1), epsilon(1). CF(0) has three main subunits: a, b and c.

It localises to the cell inner membrane. Functionally, produces ATP from ADP in the presence of a proton gradient across the membrane. The gamma chain is believed to be important in regulating ATPase activity and the flow of protons through the CF(0) complex. The polypeptide is ATP synthase gamma chain (Solibacter usitatus (strain Ellin6076)).